The sequence spans 125 residues: Phosphoribosyl-AMP cyclohydrolase (125 aa).

Asp-74 contacts Mg(2+). Cys-75 provides a ligand contact to Zn(2+). Mg(2+)-binding residues include Asp-76 and Asp-78. Residues Cys-92 and Cys-99 each contribute to the Zn(2+) site.

Belongs to the PRA-CH family. As to quaternary structure, homodimer. Requires Mg(2+) as cofactor. It depends on Zn(2+) as a cofactor.

It is found in the cytoplasm. The enzyme catalyses 1-(5-phospho-beta-D-ribosyl)-5'-AMP + H2O = 1-(5-phospho-beta-D-ribosyl)-5-[(5-phospho-beta-D-ribosylamino)methylideneamino]imidazole-4-carboxamide. It functions in the pathway amino-acid biosynthesis; L-histidine biosynthesis; L-histidine from 5-phospho-alpha-D-ribose 1-diphosphate: step 3/9. In terms of biological role, catalyzes the hydrolysis of the adenine ring of phosphoribosyl-AMP. The polypeptide is Phosphoribosyl-AMP cyclohydrolase (Geobacter sulfurreducens (strain ATCC 51573 / DSM 12127 / PCA)).